The primary structure comprises 274 residues: Large ribosomal subunit protein uL2 (274 aa).

2 disordered regions span residues 28–54 and 221–274; these read KPFA…TRHI and RGTA…RSKK. Over residues 39 to 49 the composition is skewed to polar residues; that stretch reads KTGGRNNNGRI.

It belongs to the universal ribosomal protein uL2 family. As to quaternary structure, part of the 50S ribosomal subunit. Forms a bridge to the 30S subunit in the 70S ribosome.

In terms of biological role, one of the primary rRNA binding proteins. Required for association of the 30S and 50S subunits to form the 70S ribosome, for tRNA binding and peptide bond formation. It has been suggested to have peptidyltransferase activity; this is somewhat controversial. Makes several contacts with the 16S rRNA in the 70S ribosome. This chain is Large ribosomal subunit protein uL2, found in Edwardsiella ictaluri (strain 93-146).